The chain runs to 213 residues: Redox-sensing transcriptional repressor Rex (213 aa).

The segment at residues 18 to 57 (LYYRFVNTLKSKGIDRVNSKAISEGLNIDSATIRRDFSYF) is a DNA-binding region (H-T-H motif). 92–97 (GVGNLG) contributes to the NAD(+) binding site.

Belongs to the transcriptional regulatory Rex family. Homodimer.

Its subcellular location is the cytoplasm. Modulates transcription in response to changes in cellular NADH/NAD(+) redox state. This chain is Redox-sensing transcriptional repressor Rex, found in Staphylococcus saprophyticus subsp. saprophyticus (strain ATCC 15305 / DSM 20229 / NCIMB 8711 / NCTC 7292 / S-41).